The primary structure comprises 491 residues: Ketol-acid reductoisomerase (NADP(+)) (491 aa).

The region spanning 15-208 (AQLGKCRFMG…GGHRAGVLES (194 aa)) is the KARI N-terminal Rossmann domain. Residues 45-48 (CGAQ), Arg-68, Arg-76, Ser-78, and 108-110 (DKQ) each bind NADP(+). His-132 is an active-site residue. Gly-158 lines the NADP(+) pocket. KARI C-terminal knotted domains are found at residues 209 to 344 (SFVA…TAPQ) and 345 to 484 (YEGK…MTDM). 4 residues coordinate Mg(2+): Asp-217, Glu-221, Glu-389, and Glu-393. Ser-414 provides a ligand contact to substrate.

Belongs to the ketol-acid reductoisomerase family. Mg(2+) serves as cofactor.

The enzyme catalyses (2R)-2,3-dihydroxy-3-methylbutanoate + NADP(+) = (2S)-2-acetolactate + NADPH + H(+). It catalyses the reaction (2R,3R)-2,3-dihydroxy-3-methylpentanoate + NADP(+) = (S)-2-ethyl-2-hydroxy-3-oxobutanoate + NADPH + H(+). The protein operates within amino-acid biosynthesis; L-isoleucine biosynthesis; L-isoleucine from 2-oxobutanoate: step 2/4. It participates in amino-acid biosynthesis; L-valine biosynthesis; L-valine from pyruvate: step 2/4. Its function is as follows. Involved in the biosynthesis of branched-chain amino acids (BCAA). Catalyzes an alkyl-migration followed by a ketol-acid reduction of (S)-2-acetolactate (S2AL) to yield (R)-2,3-dihydroxy-isovalerate. In the isomerase reaction, S2AL is rearranged via a Mg-dependent methyl migration to produce 3-hydroxy-3-methyl-2-ketobutyrate (HMKB). In the reductase reaction, this 2-ketoacid undergoes a metal-dependent reduction by NADPH to yield (R)-2,3-dihydroxy-isovalerate. This is Ketol-acid reductoisomerase (NADP(+)) from Citrobacter koseri (strain ATCC BAA-895 / CDC 4225-83 / SGSC4696).